The following is a 474-amino-acid chain: Gamma-aminobutyric acid receptor subunit gamma-2 (474 aa).

The N-terminal stretch at 1-38 is a signal peptide; it reads MSSPNTWSIGSSVYSPVFSQKMTLWILLLLSLYPGFTS. Over 39–274 the chain is Extracellular; the sequence is QKSDDDYEDY…FDLSRRMGYF (236 aa). Residues N51 and N128 are each glycosylated (N-linked (GlcNAc...) asparagine). Cysteines 189 and 203 form a disulfide. N-linked (GlcNAc...) asparagine glycosylation occurs at N246. The chain crosses the membrane as a helical span at residues 275–295; that stretch reads TIQTYIPCTLIVVLSWVSFWI. At 296–301 the chain is on the cytoplasmic side; it reads NKDAVP. The chain crosses the membrane as a helical span at residues 302 to 321; sequence ARTSLGITTVLTMTTLSTIA. Topologically, residues 322-333 are extracellular; it reads RKSLPKVSYVTA. A helical transmembrane segment spans residues 334–358; the sequence is MDLFVSVCFIFVFSALVEYGTLHYF. The Cytoplasmic portion of the chain corresponds to 359 to 450; that stretch reads VSNRKPSKDK…IHIRIAKMDS (92 aa). S381 carries the phosphoserine; by PKC modification. A helical membrane pass occupies residues 451–472; it reads YARIFFPTAFCLFNLVYWVSYL. At 473-474 the chain is on the extracellular side; sequence YL.

The protein belongs to the ligand-gated ion channel (TC 1.A.9) family. Gamma-aminobutyric acid receptor (TC 1.A.9.5) subfamily. GABRG2 sub-subfamily. In terms of assembly, heteropentamer, formed by a combination of alpha (GABRA1-6), beta (GABRB1-3), gamma (GABRG1-3), delta (GABRD), epsilon (GABRE), rho (GABRR1-3), pi (GABRP) and theta (GABRQ) chains, each subunit exhibiting distinct physiological and pharmacological properties. Interacts with GABARAP. Interacts with KIF21B. Identified in a complex of 720 kDa composed of LHFPL4, NLGN2, GABRA1, GABRB2, GABRG2 and GABRB3. Interacts with LHFPL4. Interacts with SHISA7; interaction leads to the regulation of GABA(A) receptor trafficking, channel deactivation kinetics and pharmacology. Post-translationally, glycosylated. Palmitoylated by ZDHHC3/GODZ; required for the accumulation of GABA(A) receptors at the postsynaptic membrane of inhibitory GABAergic synapses. As to expression, expressed in brain neurons (at protein level).

Its subcellular location is the postsynaptic cell membrane. It localises to the cell membrane. The protein localises to the cell projection. The protein resides in the dendrite. It is found in the cytoplasmic vesicle membrane. The catalysed reaction is chloride(in) = chloride(out). Its activity is regulated as follows. Allosterically activated by benzodiazepines. Activated by pentobarbital. Inhibited by the antagonist bicuculline. Inhibited by zinc ions. Potentiated by histamine. Functionally, gamma subunit of the heteropentameric ligand-gated chloride channel gated by gamma-aminobutyric acid (GABA), a major inhibitory neurotransmitter in the brain. GABA-gated chloride channels, also named GABA(A) receptors (GABAAR), consist of five subunits arranged around a central pore and contain GABA active binding site(s) located at the alpha and beta subunit interface(s). When activated by GABA, GABAARs selectively allow the flow of chloride anions across the cell membrane down their electrochemical gradient. Gamma-2/GABRG2-containing GABAARs are found at both synaptic and extrasynaptic sites. Chloride influx into the postsynaptic neuron following GABAAR opening decreases the neuron ability to generate a new action potential, thereby reducing nerve transmission. GABAARs containing alpha-1 and beta-2 or -3 subunits exhibit synaptogenic activity; the gamma-2 subunit being necessary but not sufficient to induce rapid synaptic contacts formation. Extrasynaptic gamma-2-containing receptors contribute to the tonic GABAergic inhibition. GABAARs function also as histamine receptor where histamine binds at the interface of two neighboring beta subunits and potentiates GABA response in a gamma-2 subunit-controlled manner. The chain is Gamma-aminobutyric acid receptor subunit gamma-2 from Mus musculus (Mouse).